A 304-amino-acid chain; its full sequence is Recombination-associated protein RdgC (304 aa).

This sequence belongs to the RdgC family.

It is found in the cytoplasm. The protein resides in the nucleoid. Functionally, may be involved in recombination. The polypeptide is Recombination-associated protein RdgC (Shewanella baltica (strain OS195)).